Reading from the N-terminus, the 719-residue chain is DNA ligase (719 aa).

Residues 42–46 (DAEYD), 91–92 (SL), and E125 contribute to the NAD(+) site. The active-site N6-AMP-lysine intermediate is K127. Residues R148, E184, K300, and K324 each coordinate NAD(+). The Zn(2+) site is built by C429, C432, C447, and C453. Residues 638–719 (TASSPIAEKI…WMRLIKGHNI (82 aa)) form the BRCT domain.

Belongs to the NAD-dependent DNA ligase family. LigA subfamily. The cofactor is Mg(2+). Mn(2+) serves as cofactor.

It carries out the reaction NAD(+) + (deoxyribonucleotide)n-3'-hydroxyl + 5'-phospho-(deoxyribonucleotide)m = (deoxyribonucleotide)n+m + AMP + beta-nicotinamide D-nucleotide.. Functionally, DNA ligase that catalyzes the formation of phosphodiester linkages between 5'-phosphoryl and 3'-hydroxyl groups in double-stranded DNA using NAD as a coenzyme and as the energy source for the reaction. It is essential for DNA replication and repair of damaged DNA. The chain is DNA ligase from Bartonella tribocorum (strain CIP 105476 / IBS 506).